Reading from the N-terminus, the 119-residue chain is Protein FAM24A-like (119 aa).

An N-terminal signal peptide occupies residues M1–A40.

The protein belongs to the FAM24 family.

It is found in the secreted. This is Protein FAM24A-like from Mus musculus (Mouse).